The chain runs to 58 residues: Small ribosomal subunit protein bS21 (58 aa).

It belongs to the bacterial ribosomal protein bS21 family.

The polypeptide is Small ribosomal subunit protein bS21 (Prochlorococcus marinus (strain MIT 9515)).